A 206-amino-acid polypeptide reads, in one-letter code: 2,3-bisphosphoglycerate-dependent phosphoglycerate mutase (206 aa).

Residues 9 to 16 (RHGQSEWN), 22 to 23 (TG), Arg61, 88 to 91 (ERDY), Lys99, 115 to 116 (RR), and 159 to 160 (GN) each bind substrate. The Tele-phosphohistidine intermediate role is filled by His10. Residue Glu88 is the Proton donor/acceptor of the active site.

This sequence belongs to the phosphoglycerate mutase family. BPG-dependent PGAM subfamily. In terms of assembly, homodimer.

It catalyses the reaction (2R)-2-phosphoglycerate = (2R)-3-phosphoglycerate. It participates in carbohydrate degradation; glycolysis; pyruvate from D-glyceraldehyde 3-phosphate: step 3/5. In terms of biological role, catalyzes the interconversion of 2-phosphoglycerate and 3-phosphoglycerate. The sequence is that of 2,3-bisphosphoglycerate-dependent phosphoglycerate mutase from Azorhizobium caulinodans (strain ATCC 43989 / DSM 5975 / JCM 20966 / LMG 6465 / NBRC 14845 / NCIMB 13405 / ORS 571).